Reading from the N-terminus, the 477-residue chain is Bifunctional protein HldE (477 aa).

The ribokinase stretch occupies residues 1–318; the sequence is MKVTLPEFER…ENAVRGRADT (318 aa). K179 bears the N6-acetyllysine mark. 195–198 is a binding site for ATP; it reads NLSE. The active site involves D264. A cytidylyltransferase region spans residues 344–477; the sequence is MTNGVFDILH…IKKIQQDKKG (134 aa).

In the N-terminal section; belongs to the carbohydrate kinase PfkB family. The protein in the C-terminal section; belongs to the cytidylyltransferase family. Homodimer.

The catalysed reaction is D-glycero-beta-D-manno-heptose 7-phosphate + ATP = D-glycero-beta-D-manno-heptose 1,7-bisphosphate + ADP + H(+). The enzyme catalyses D-glycero-beta-D-manno-heptose 1-phosphate + ATP + H(+) = ADP-D-glycero-beta-D-manno-heptose + diphosphate. Its pathway is nucleotide-sugar biosynthesis; ADP-L-glycero-beta-D-manno-heptose biosynthesis; ADP-L-glycero-beta-D-manno-heptose from D-glycero-beta-D-manno-heptose 7-phosphate: step 1/4. It functions in the pathway nucleotide-sugar biosynthesis; ADP-L-glycero-beta-D-manno-heptose biosynthesis; ADP-L-glycero-beta-D-manno-heptose from D-glycero-beta-D-manno-heptose 7-phosphate: step 3/4. In terms of biological role, catalyzes the phosphorylation of D-glycero-D-manno-heptose 7-phosphate at the C-1 position to selectively form D-glycero-beta-D-manno-heptose-1,7-bisphosphate. Catalyzes the ADP transfer from ATP to D-glycero-beta-D-manno-heptose 1-phosphate, yielding ADP-D-glycero-beta-D-manno-heptose. The sequence is that of Bifunctional protein HldE from Escherichia coli O9:H4 (strain HS).